Here is a 504-residue protein sequence, read N- to C-terminus: Ribose import ATP-binding protein RbsA (504 aa).

ABC transporter domains follow at residues 6–242 (LELK…VGRR) and 252–495 (VRHG…VGKT). 38-45 (GENGAGKS) serves as a coordination point for ATP.

It belongs to the ABC transporter superfamily. Ribose importer (TC 3.A.1.2.1) family. The complex is composed of an ATP-binding protein (RbsA), two transmembrane proteins (RbsC) and a solute-binding protein (RbsB).

It is found in the cell inner membrane. The enzyme catalyses D-ribose(out) + ATP + H2O = D-ribose(in) + ADP + phosphate + H(+). Its function is as follows. Part of the ABC transporter complex RbsABC involved in ribose import. Responsible for energy coupling to the transport system. This Photobacterium profundum (strain SS9) protein is Ribose import ATP-binding protein RbsA.